Consider the following 430-residue polypeptide: Proteinase-activated receptor 1 (430 aa).

The first 21 residues, 1 to 21 (MGPRRLLIVALGLSLCGPLLS), serve as a signal peptide directing secretion. Positions 22 to 41 (SRVPMSQPESERTDATVNPR) are cleaved as a propeptide — removed for receptor activation. The Extracellular segment spans residues 42-107 (SFFLRNPSEN…SGYLTSPWLT (66 aa)). Residues asparagine 67 and asparagine 80 are each glycosylated (N-linked (GlcNAc...) asparagine). The chain crosses the membrane as a helical span at residues 108–133 (LFMPSVYTIVFIVSLPLNVLAIAVFV). Topologically, residues 134-142 (LRMKVKKPA) are cytoplasmic. A helical transmembrane segment spans residues 143-162 (VVYMLHLAMADVLFVSVLPF). Topologically, residues 163–181 (KISYYFSGTDWQFGSGMCR) are extracellular. The cysteines at positions 180 and 259 are disulfide-linked. A helical transmembrane segment spans residues 182 to 203 (FATAAFYGNMYASIMLMTVISI). Residues 204–223 (DRFLAVVYPIQSLSWRTLGR) are Cytoplasmic-facing. The chain crosses the membrane as a helical span at residues 224–244 (ANFTCVVIWVMAIMGVVPLLL). Topologically, residues 245–273 (KEQTTRVPGLNITTCHDVLSENLMQGFYS) are extracellular. Asparagine 255 carries N-linked (GlcNAc...) asparagine glycosylation. Residues 274–293 (YYFSAFSAIFFLVPLIVSTV) form a helical membrane-spanning segment. At 294 to 316 (CYTSIIRCLSSSAVANRSKKSRA) the chain is on the cytoplasmic side. The helical transmembrane segment at 317–339 (LFLSAAVFCIFIVCFGPTNVLLI) threads the bilayer. Over 340 to 354 (VHYLFLSDSPGTEAA) the chain is Extracellular. The chain crosses the membrane as a helical span at residues 355 to 379 (YFAYLLCVCVSSVSCCIDPLIYYYA). Over 380-430 (SSECQRHLYSILCCKESSDPNSCNSTGQLMPSKMDTCSSHLNNSIYKKLLA) the chain is Cytoplasmic. Serine 423 bears the Phosphoserine mark.

This sequence belongs to the G-protein coupled receptor 1 family. In terms of processing, proteolytic cleavage by thrombin generates a new N-terminus that functions as a tethered ligand. Also proteolytically cleaved by cathepsin CTSG. Phosphorylated in the C-terminal tail; probably mediating desensitization prior to the uncoupling and internalization of the receptor.

The protein localises to the cell membrane. High affinity receptor that binds the activated thrombin, leading to calcium release from intracellular stores. The thrombin-activated receptor signaling pathway is mediated through PTX-insensitive G proteins, activation of phospholipase C resulting in the production of 1D-myo-inositol 1,4,5-trisphosphate (InsP3) which binds to InsP3 receptors causing calcium release from the stores. In astrocytes, the calcium released into the cytosol allows the Ca(2+)-dependent release of L-glutamate into the synaptic cleft through BEST1, that targets the neuronal postsynaptic GRIN2A/NMDAR receptor resulting in the synaptic plasticity regulation. May play a role in platelets activation and in vascular development. Mediates up-regulation of pro-inflammatory cytokines, such as MCP-1/CCL2 and IL6, triggered by coagulation factor Xa (F10) in cardiac fibroblasts and umbilical vein endothelial cells. The polypeptide is Proteinase-activated receptor 1 (Mus musculus (Mouse)).